Here is a 714-residue protein sequence, read N- to C-terminus: Structure-specific endonuclease subunit SLX4 2 (714 aa).

Basic and acidic residues-rich tracts occupy residues 1–14 (MSPEGEESHAEDNL) and 24–34 (IHEETLAEESH). 2 disordered regions span residues 1-114 (MSPE…EQQG) and 338-369 (SSGPVNDKQPSVASETVESDSTPIVSPVKTPQ). Residues 36-46 (QAIQRSISRLS) show a composition bias toward polar residues. The span at 79–92 (KTKKRKLKVSKPRK) shows a compositional bias: basic residues.

The protein belongs to the SLX4 family. Forms a heterodimer with SLX1. Post-translationally, phosphorylated in response to DNA damage.

It localises to the nucleus. In terms of biological role, regulatory subunit of the SLX1-SLX4 structure-specific endonuclease that resolves DNA secondary structures generated during DNA repair and recombination. Has endonuclease activity towards branched DNA substrates, introducing single-strand cuts in duplex DNA close to junctions with ss-DNA. In Candida tropicalis (strain ATCC MYA-3404 / T1) (Yeast), this protein is Structure-specific endonuclease subunit SLX4 2.